A 591-amino-acid polypeptide reads, in one-letter code: MAGGQIEKLVKYKSTVKDPGTPGFLRIREGMLLFVPNDPKSDSKLKVLTQNIKSQKYTKEGSNKPPWLNLTNKQAKSHIFEFENYPDMHACRDFITKALAKCELEPNKSVVSTSSEQLSIKELELRFKLLRENSELQRLHKQFVESKVLTEDEFWATRKKLLGKDSIRKSKQQLGLKSMMVSGIKPSTDGRTNRVTFNLTPEIIFQIFAEKPAVRQAFINYVPSKMTEKDFWTKYFRAEYLYSTKNTAVAAAEAAEDEELAVFLKPDEILARETRHKIRRVDPTLDMEADQGDDYTHLMDHGIQRDGTMDVVEPQNDQFKRSLLQDLNRHAAVVLEGRSIDVESEDTRIVAEALTRVKQVSKADGETTKDANQERLERMSRVAGMEDLQAPQNFPLAPLSIKDPRDYFESQQGNVLNVPRGAKGLKRNVHEAYGLLKESILEIRATGLSDPLIKPEVSFEVFSSLTRTIATAKNINGKNPRESFLDRLPKSTKDEVLHHWTSIQELLKHFWSSYPITTTYLHTKVGKLKDAMSNTYSKLEAMKESVQSDLRHQVSLLVRPMQQALDAAFHHYEVDLQRRTAKSGERPNGYV.

BSD domains follow at residues 112–166 (STSS…GKDS) and 191–243 (RTNR…YLYS).

Belongs to the TFB1 family. As to quaternary structure, component of the 7-subunit TFIIH core complex composed of XPB, XPD, TFB1/GTF2H1, GTF2H2/P44, TFB4/GTF2H3, TFB2/GTF2H4 and TFB5/GTF2H5, which is active in NER. The core complex associates with the 3-subunit CDK-activating kinase (CAK) module composed of CYCH1/cyclin H1, CDKD and MAT1/At4g30820 to form the 10-subunit holoenzyme (holo-TFIIH) active in transcription.

It is found in the nucleus. In terms of biological role, component of the general transcription and DNA repair factor IIH (TFIIH) core complex, which is involved in general and transcription-coupled nucleotide excision repair (NER) of damaged DNA and, when complexed to CAK, in RNA transcription by RNA polymerase II. In NER, TFIIH acts by opening DNA around the lesion to allow the excision of the damaged oligonucleotide and its replacement by a new DNA fragment. In transcription, TFIIH has an essential role in transcription initiation. When the pre-initiation complex (PIC) has been established, TFIIH is required for promoter opening and promoter escape. Phosphorylation of the C-terminal tail (CTD) of the largest subunit of RNA polymerase II by the kinase module CAK controls the initiation of transcription. The polypeptide is General transcription and DNA repair factor IIH subunit TFB1-1 (Arabidopsis thaliana (Mouse-ear cress)).